Consider the following 443-residue polypeptide: Trigger factor (443 aa).

Residues 163–248 (GDTAVIDFEG…INEIKAKELP (86 aa)) form the PPIase FKBP-type domain.

The protein belongs to the FKBP-type PPIase family. Tig subfamily.

It localises to the cytoplasm. It carries out the reaction [protein]-peptidylproline (omega=180) = [protein]-peptidylproline (omega=0). Functionally, involved in protein export. Acts as a chaperone by maintaining the newly synthesized protein in an open conformation. Functions as a peptidyl-prolyl cis-trans isomerase. The protein is Trigger factor of Agathobacter rectalis (strain ATCC 33656 / DSM 3377 / JCM 17463 / KCTC 5835 / VPI 0990) (Eubacterium rectale).